Reading from the N-terminus, the 403-residue chain is Heptahelical transmembrane protein ADIPOR3 (403 aa).

Topologically, residues 1-73 (MAAAAGEEVE…LSAFSIHNET (73 aa)) are cytoplasmic. Residues 74–94 (LNVWTHLIGFFIFLVLTIYTA) traverse the membrane as a helical segment. Residues 95-209 (TQVPNVVDLQ…QLIRPIPRWP (115 aa)) lie on the Extracellular side of the membrane. Residues 210–230 (FYAFLGGAMFCLLASSTCHLL) traverse the membrane as a helical segment. At 231–246 (SCHSRRLAYIMLRLDY) the chain is on the cytoplasmic side. A helical membrane pass occupies residues 247 to 267 (AGIAALIATSFYPPVYYSFMC). At 268–274 (YPFFCNL) the chain is on the extracellular side. The helical transmembrane segment at 275-295 (YLSCITILGVATIAFSLLPVF) threads the bilayer. At 296–306 (QNPEFRTIRAC) the chain is on the cytoplasmic side. The helical transmembrane segment at 307 to 327 (LFFGMGASGVIPVIHKLILFW) threads the bilayer. Residues 328–331 (HQPE) lie on the Extracellular side of the membrane. The chain crosses the membrane as a helical span at residues 332–352 (ALHTTAYEVLMGLFYGIGALV). Residues 353 to 374 (YATRVPERWMPGKFDIAGHSHQ) are Cytoplasmic-facing. Residues 375 to 395 (LFHVLVVAGAYTHYHSGLVYL) traverse the membrane as a helical segment. The Extracellular segment spans residues 396-403 (KWRDVQGC).

Belongs to the ADIPOR family.

The protein resides in the membrane. Its function is as follows. May play a role in abiotic stress response. In Oryza sativa subsp. japonica (Rice), this protein is Heptahelical transmembrane protein ADIPOR3 (ADIPOR3).